Reading from the N-terminus, the 419-residue chain is Lipoyl synthase, mitochondrial (419 aa).

The transit peptide at 1 to 26 (MAVCAGRLKCFGNPAVSLRTAASRAY) directs the protein to the mitochondrion. Over residues 28-47 (TTTSPDPAIPSSSSASSSSA) the composition is skewed to low complexity. The interval 28–61 (TTTSPDPAIPSSSSASSSSALPKRPQTSFRDKLN) is disordered. 7 residues coordinate [4Fe-4S] cluster: Cys136, Cys141, Cys147, Cys167, Cys171, Cys174, and Ser382. Residues 150-371 (GSSKSAATAT…KDRALEMGFL (222 aa)) enclose the Radical SAM core domain. The disordered stretch occupies residues 399-419 (AESTGPESTNVPNVTPDAIVR).

The protein belongs to the radical SAM superfamily. Lipoyl synthase family. [4Fe-4S] cluster is required as a cofactor.

It is found in the mitochondrion. The enzyme catalyses [[Fe-S] cluster scaffold protein carrying a second [4Fe-4S](2+) cluster] + N(6)-octanoyl-L-lysyl-[protein] + 2 oxidized [2Fe-2S]-[ferredoxin] + 2 S-adenosyl-L-methionine + 4 H(+) = [[Fe-S] cluster scaffold protein] + N(6)-[(R)-dihydrolipoyl]-L-lysyl-[protein] + 4 Fe(3+) + 2 hydrogen sulfide + 2 5'-deoxyadenosine + 2 L-methionine + 2 reduced [2Fe-2S]-[ferredoxin]. Its pathway is protein modification; protein lipoylation via endogenous pathway; protein N(6)-(lipoyl)lysine from octanoyl-[acyl-carrier-protein]: step 2/2. Functionally, catalyzes the radical-mediated insertion of two sulfur atoms into the C-6 and C-8 positions of the octanoyl moiety bound to the lipoyl domains of lipoate-dependent enzymes, thereby converting the octanoylated domains into lipoylated derivatives. This chain is Lipoyl synthase, mitochondrial, found in Coccidioides posadasii (strain C735) (Valley fever fungus).